A 355-amino-acid polypeptide reads, in one-letter code: Hydroxylysine kinase (355 aa).

The Proton acceptor role is filled by Asp-215.

It belongs to the aminoglycoside phosphotransferase family.

Its subcellular location is the cytoplasm. The catalysed reaction is (5R)-5-hydroxy-L-lysine + GTP = (5R)-5-phosphooxy-L-lysine + GDP + H(+). Its function is as follows. Catalyzes the GTP-dependent phosphorylation of 5-hydroxy-L-lysine. The protein is Hydroxylysine kinase (hykk) of Danio rerio (Zebrafish).